The following is a 384-amino-acid chain: Putative glutamate--cysteine ligase 2-1 (384 aa).

The protein belongs to the glutamate--cysteine ligase type 2 family. YbdK subfamily.

The enzyme catalyses L-cysteine + L-glutamate + ATP = gamma-L-glutamyl-L-cysteine + ADP + phosphate + H(+). Its function is as follows. ATP-dependent carboxylate-amine ligase which exhibits weak glutamate--cysteine ligase activity. The chain is Putative glutamate--cysteine ligase 2-1 from Paenarthrobacter aurescens (strain TC1).